Consider the following 243-residue polypeptide: 1-(5-phosphoribosyl)-5-[(5-phosphoribosylamino)methylideneamino] imidazole-4-carboxamide isomerase (243 aa).

Asp8 serves as the catalytic Proton acceptor. Asp128 acts as the Proton donor in catalysis.

Belongs to the HisA/HisF family.

The protein localises to the cytoplasm. The catalysed reaction is 1-(5-phospho-beta-D-ribosyl)-5-[(5-phospho-beta-D-ribosylamino)methylideneamino]imidazole-4-carboxamide = 5-[(5-phospho-1-deoxy-D-ribulos-1-ylimino)methylamino]-1-(5-phospho-beta-D-ribosyl)imidazole-4-carboxamide. It functions in the pathway amino-acid biosynthesis; L-histidine biosynthesis; L-histidine from 5-phospho-alpha-D-ribose 1-diphosphate: step 4/9. This chain is 1-(5-phosphoribosyl)-5-[(5-phosphoribosylamino)methylideneamino] imidazole-4-carboxamide isomerase, found in Opitutus terrae (strain DSM 11246 / JCM 15787 / PB90-1).